We begin with the raw amino-acid sequence, 260 residues long: MNGPVRTEPLHGEIPLLASSGSYSVVVLLRGYAEPQGAGDAVRADGTVTLVLPRGWASDSSRGLAPSADGGSKTALEEAVRGPILVDTGGPWARGALLEALATQGVAPEDVTLVVGTHGHSDHIGNLGLFPEAALLVSHDFCLPEGLYLPHGLCETQPLILGSGLQVWATPGHGGQRDVSVVVEGTSLGTVVVAGDVFERLGDEDSWQALSEDPVAQQRSRERILSVADVVVPGHGAPFRVVRETVKSSEDLICEGKAVA.

Histidine 118, histidine 120, aspartate 122, histidine 123, histidine 173, aspartate 196, and histidine 235 together coordinate Zn(2+).

The protein belongs to the metallo-beta-lactamase superfamily. Glyoxalase II family. Homodimer. It depends on Zn(2+) as a cofactor.

It is found in the cytoplasm. The protein resides in the cytosol. The protein localises to the nucleus. The catalysed reaction is a ribonucleotidyl-ribonucleotide-RNA + H2O = a 3'-end ribonucleotide-RNA + a 5'-end 5'-phospho-ribonucleoside-RNA + H(+). Functionally, endoribonuclease that catalyzes the hydrolysis of histone-coding pre-mRNA 3'-end. Involved in histone pre-mRNA processing during the S-phase of the cell cycle, which is required for entering/progressing through S-phase. Cleaves histone pre-mRNA at a major and a minor cleavage site after the 5'-ACCCA-3' and the 5'-ACCCACA-3' sequence, respectively, and located downstream of the stem-loop. May require the presence of the HDE element located at the histone pre-RNA 3'-end to avoid non-specific cleavage. The sequence is that of Metallo-beta-lactamase domain-containing protein 1 from Mus musculus (Mouse).